We begin with the raw amino-acid sequence, 139 residues long: Ribulose bisphosphate carboxylase small subunit (139 aa).

This sequence belongs to the RuBisCO small chain family. In terms of assembly, heterohexadecamer of 8 large and 8 small subunits.

The protein localises to the plastid. It localises to the chloroplast. Functionally, ruBisCO catalyzes two reactions: the carboxylation of D-ribulose 1,5-bisphosphate, the primary event in carbon dioxide fixation, as well as the oxidative fragmentation of the pentose substrate in the photorespiration process. Both reactions occur simultaneously and in competition at the same active site. Although the small subunit is not catalytic it is essential for maximal activity. This is Ribulose bisphosphate carboxylase small subunit from Guillardia theta (Cryptophyte).